The primary structure comprises 427 residues: Histidine--tRNA ligase (427 aa).

This sequence belongs to the class-II aminoacyl-tRNA synthetase family. In terms of assembly, homodimer.

It is found in the cytoplasm. The enzyme catalyses tRNA(His) + L-histidine + ATP = L-histidyl-tRNA(His) + AMP + diphosphate + H(+). This chain is Histidine--tRNA ligase, found in Proteus mirabilis (strain HI4320).